A 732-amino-acid chain; its full sequence is 1,4-alpha-glucan branching enzyme GlgB (732 aa).

D415 acts as the Nucleophile in catalysis. The active-site Proton donor is the E468.

It belongs to the glycosyl hydrolase 13 family. GlgB subfamily. In terms of assembly, monomer.

The enzyme catalyses Transfers a segment of a (1-&gt;4)-alpha-D-glucan chain to a primary hydroxy group in a similar glucan chain.. It functions in the pathway glycan biosynthesis; glycogen biosynthesis. Catalyzes the formation of the alpha-1,6-glucosidic linkages in glycogen by scission of a 1,4-alpha-linked oligosaccharide from growing alpha-1,4-glucan chains and the subsequent attachment of the oligosaccharide to the alpha-1,6 position. The polypeptide is 1,4-alpha-glucan branching enzyme GlgB (Nitrosomonas eutropha (strain DSM 101675 / C91 / Nm57)).